A 379-amino-acid chain; its full sequence is Cathepsin B-like protease 1 (379 aa).

Residues 1 to 30 (MADSCCIRLHLLASVFLLLFSSFNLQGIAA) form the signal peptide. Residues 31 to 102 (ENLSKQKLTS…PIVRHDLSLK (72 aa)) constitute a propeptide, activation peptide. Residues N32 and N69 are each glycosylated (N-linked (GlcNAc...) asparagine). 6 cysteine pairs are disulfide-bonded: C116/C165, C148/C191, C182/C236, C183/C187, C213/C240, and C222/C227. C151 is an active-site residue. N171 carries an N-linked (GlcNAc...) asparagine glycan. Active-site residues include H306 and N327. An N-linked (GlcNAc...) asparagine glycan is attached at N330. The propeptide at 363 to 379 (NVFKGITTSDDLLVSSV) is removed in mature form.

This sequence belongs to the peptidase C1 family.

Thiol protease that plays a central role in plant programmed cell death (PCD). In addition to its role in protein degradation, may cleave and/or degrade a number of target proteins, activating signaling towards PCD. Contributes to the increase of caspase-3-like activity after UV-C-induced PCD and is required for abiotic stress-induced PCD. Functions redundantly with CATHB2 and CATHB3 in basal defense and distinct forms of plant programmed cell death (PCD). Participates in the establishment of basal resistance against the bacterial pathogen Pseudomonase syringae pv. tomato DC3000. Required for full levels of PCD during resistance (R) gene-mediated hypersensitive response (HR). Involved in the regulation of senescence, a developmental form of PCD in plants. The protein is Cathepsin B-like protease 1 of Arabidopsis thaliana (Mouse-ear cress).